A 171-amino-acid polypeptide reads, in one-letter code: Inosine/xanthosine triphosphatase (171 aa).

8–13 (TTNPAK) provides a ligand contact to substrate. Glutamate 38 is a Mg(2+) binding site.

It belongs to the YjjX NTPase family. Homodimer. The cofactor is Mg(2+). Mn(2+) is required as a cofactor.

The catalysed reaction is XTP + H2O = XDP + phosphate + H(+). It catalyses the reaction ITP + H2O = IDP + phosphate + H(+). Functionally, phosphatase that hydrolyzes non-canonical purine nucleotides such as XTP and ITP to their respective diphosphate derivatives. Probably excludes non-canonical purines from DNA/RNA precursor pool, thus preventing their incorporation into DNA/RNA and avoiding chromosomal lesions. In Klebsiella pneumoniae (strain 342), this protein is Inosine/xanthosine triphosphatase.